The primary structure comprises 329 residues: Putative glucose-6-phosphate 1-epimerase (329 aa).

Over residues 1-13 (MAAPAPAGAAASP) the composition is skewed to low complexity. The segment at 1-20 (MAAPAPAGAAASPSPKPQLP) is disordered. R82, Q100, and R105 together coordinate substrate. Residue H183 is part of the active site. Residue D228 participates in substrate binding. E287 is a catalytic residue.

It belongs to the glucose-6-phosphate 1-epimerase family.

It catalyses the reaction alpha-D-glucose 6-phosphate = beta-D-glucose 6-phosphate. This chain is Putative glucose-6-phosphate 1-epimerase, found in Cenchrus ciliaris (Buffelgrass).